Reading from the N-terminus, the 301-residue chain is N-acetylmuramic acid 6-phosphate etherase (301 aa).

One can recognise an SIS domain in the interval 57-220 (VVERLRAGGR…STISMVRLGK (164 aa)). Glu85 serves as the catalytic Proton donor. Glu116 is an active-site residue.

It belongs to the GCKR-like family. MurNAc-6-P etherase subfamily. Homodimer.

The enzyme catalyses N-acetyl-D-muramate 6-phosphate + H2O = N-acetyl-D-glucosamine 6-phosphate + (R)-lactate. It participates in amino-sugar metabolism; N-acetylmuramate degradation. Its function is as follows. Specifically catalyzes the cleavage of the D-lactyl ether substituent of MurNAc 6-phosphate, producing GlcNAc 6-phosphate and D-lactate. This Rubrobacter xylanophilus (strain DSM 9941 / JCM 11954 / NBRC 16129 / PRD-1) protein is N-acetylmuramic acid 6-phosphate etherase.